Consider the following 271-residue polypeptide: MASTTNNTPIDTVILDIEGTVCPITFVKDTLFPYFIEKLPSILQKFQYPLPTTTTSDNDDDDDDDPVLNILKQLPENIIQSWESIFNHFKNLVDQDIKDPILKSLQGLIWKQGYENNELKAPIYQDSIKFIESFPTVKSKDNQRKIYIYSSGSIKAQILLFGHVKNSSTSTTSSSIDNDTIDLNDKLNGYFDITTVGFKNQSNSYIKILQEINKSQYPQSVLFLSDNINEVNAAINAGMKSYIVIRPGNSPINDEDKKFHKIIYSLDELDL.

Mg(2+) contacts are provided by Asp16 and Glu18. Substrate-binding positions include Ser150–Ser151 and Lys199. Asp226 contributes to the Mg(2+) binding site.

Belongs to the HAD-like hydrolase superfamily. MasA/MtnC family. Monomer. It depends on Mg(2+) as a cofactor.

It localises to the cytoplasm. The protein localises to the nucleus. The catalysed reaction is 5-methylsulfanyl-2,3-dioxopentyl phosphate + H2O = 1,2-dihydroxy-5-(methylsulfanyl)pent-1-en-3-one + phosphate. It functions in the pathway amino-acid biosynthesis; L-methionine biosynthesis via salvage pathway; L-methionine from S-methyl-5-thio-alpha-D-ribose 1-phosphate: step 3/6. It participates in amino-acid biosynthesis; L-methionine biosynthesis via salvage pathway; L-methionine from S-methyl-5-thio-alpha-D-ribose 1-phosphate: step 4/6. In terms of biological role, bifunctional enzyme that catalyzes the enolization of 2,3-diketo-5-methylthiopentyl-1-phosphate (DK-MTP-1-P) into the intermediate 2-hydroxy-3-keto-5-methylthiopentenyl-1-phosphate (HK-MTPenyl-1-P), which is then dephosphorylated to form the acireductone 1,2-dihydroxy-3-keto-5-methylthiopentene (DHK-MTPene). In Candida dubliniensis (strain CD36 / ATCC MYA-646 / CBS 7987 / NCPF 3949 / NRRL Y-17841) (Yeast), this protein is Enolase-phosphatase E1.